The chain runs to 242 residues: Biosynthetic peptidoglycan transglycosylase (242 aa).

A helical membrane pass occupies residues Leu-19–Val-39.

Belongs to the glycosyltransferase 51 family.

Its subcellular location is the cell inner membrane. The enzyme catalyses [GlcNAc-(1-&gt;4)-Mur2Ac(oyl-L-Ala-gamma-D-Glu-L-Lys-D-Ala-D-Ala)](n)-di-trans,octa-cis-undecaprenyl diphosphate + beta-D-GlcNAc-(1-&gt;4)-Mur2Ac(oyl-L-Ala-gamma-D-Glu-L-Lys-D-Ala-D-Ala)-di-trans,octa-cis-undecaprenyl diphosphate = [GlcNAc-(1-&gt;4)-Mur2Ac(oyl-L-Ala-gamma-D-Glu-L-Lys-D-Ala-D-Ala)](n+1)-di-trans,octa-cis-undecaprenyl diphosphate + di-trans,octa-cis-undecaprenyl diphosphate + H(+). Its pathway is cell wall biogenesis; peptidoglycan biosynthesis. Functionally, peptidoglycan polymerase that catalyzes glycan chain elongation from lipid-linked precursors. This Escherichia coli O139:H28 (strain E24377A / ETEC) protein is Biosynthetic peptidoglycan transglycosylase.